A 341-amino-acid chain; its full sequence is Large ribosomal subunit protein uL10 (341 aa).

A disordered region spans residues 301-341 (EAAPAAAPAAEEKAEEEKKEEEEEKKEDQELSGLDSIFGGF).

It belongs to the universal ribosomal protein uL10 family. As to quaternary structure, part of the 50S ribosomal subunit. Forms part of the ribosomal stalk which helps the ribosome interact with GTP-bound translation factors. Forms a heptameric L10(L12)2(L12)2(L12)2 complex, where L10 forms an elongated spine to which the L12 dimers bind in a sequential fashion.

Functionally, forms part of the ribosomal stalk, playing a central role in the interaction of the ribosome with GTP-bound translation factors. The polypeptide is Large ribosomal subunit protein uL10 (Aeropyrum pernix (strain ATCC 700893 / DSM 11879 / JCM 9820 / NBRC 100138 / K1)).